The sequence spans 300 residues: Glycerol-3-phosphate dehydrogenase [NAD(P)+] (300 aa).

NADPH-binding residues include Trp-11, Lys-33, and Lys-79. The sn-glycerol 3-phosphate site is built by Lys-79, Gly-107, and Ser-109. An NADPH-binding site is contributed by Ala-111. 5 residues coordinate sn-glycerol 3-phosphate: Lys-161, Asp-214, Ser-224, Arg-225, and Asn-226. Lys-161 (proton acceptor) is an active-site residue. Arg-225 serves as a coordination point for NADPH. Val-249 and Glu-251 together coordinate NADPH.

Belongs to the NAD-dependent glycerol-3-phosphate dehydrogenase family.

The protein resides in the cytoplasm. It carries out the reaction sn-glycerol 3-phosphate + NAD(+) = dihydroxyacetone phosphate + NADH + H(+). The enzyme catalyses sn-glycerol 3-phosphate + NADP(+) = dihydroxyacetone phosphate + NADPH + H(+). It participates in membrane lipid metabolism; glycerophospholipid metabolism. Its function is as follows. Catalyzes the reduction of the glycolytic intermediate dihydroxyacetone phosphate (DHAP) to sn-glycerol 3-phosphate (G3P), the key precursor for phospholipid synthesis. This Campylobacter lari (strain RM2100 / D67 / ATCC BAA-1060) protein is Glycerol-3-phosphate dehydrogenase [NAD(P)+].